The chain runs to 551 residues: Glucans biosynthesis protein D (551 aa).

The segment at residues 1 to 32 (MDRRRFIKGSMAMAAVCGTSGIASLFSQAAFA) is a signal peptide (tat-type signal).

The protein belongs to the OpgD/OpgG family. Post-translationally, predicted to be exported by the Tat system. The position of the signal peptide cleavage has not been experimentally proven.

The protein resides in the periplasm. It functions in the pathway glycan metabolism; osmoregulated periplasmic glucan (OPG) biosynthesis. Functionally, probably involved in the control of the structural glucose backbone of osmoregulated periplasmic glucans (OPGs). The chain is Glucans biosynthesis protein D from Escherichia coli (strain K12 / MC4100 / BW2952).